The chain runs to 449 residues: Tubulin beta-6 chain (449 aa).

8 residues coordinate GTP: Q11, E69, S138, G142, T143, G144, N204, and N226. Residue E69 participates in Mg(2+) binding. The disordered stretch occupies residues 425–449 (YQDATADDEGEYEEDEDEEEILDHE). Positions 429 to 449 (TADDEGEYEEDEDEEEILDHE) are enriched in acidic residues.

This sequence belongs to the tubulin family. Dimer of alpha and beta chains. A typical microtubule is a hollow water-filled tube with an outer diameter of 25 nm and an inner diameter of 15 nM. Alpha-beta heterodimers associate head-to-tail to form protofilaments running lengthwise along the microtubule wall with the beta-tubulin subunit facing the microtubule plus end conferring a structural polarity. Microtubules usually have 13 protofilaments but different protofilament numbers can be found in some organisms and specialized cells. It depends on Mg(2+) as a cofactor.

Its subcellular location is the cytoplasm. The protein resides in the cytoskeleton. Tubulin is the major constituent of microtubules, a cylinder consisting of laterally associated linear protofilaments composed of alpha- and beta-tubulin heterodimers. Microtubules grow by the addition of GTP-tubulin dimers to the microtubule end, where a stabilizing cap forms. Below the cap, tubulin dimers are in GDP-bound state, owing to GTPase activity of alpha-tubulin. The chain is Tubulin beta-6 chain (TUBB6) from Arabidopsis thaliana (Mouse-ear cress).